The following is a 289-amino-acid chain: Splicing factor C9orf78 homolog (289 aa).

Disordered stretches follow at residues 1–30 and 85–111; these read MRIT…VRLK and RGKD…RRDE. The interval 5 to 58 is interaction with SNRNP200; sequence GKTFRRRRADSESEEDEQESEEVRLKLEETREVQNLRKRPNGVSAAALLVGEKV. 2 positions are modified to phosphoserine: Ser15 and Ser17. Tyr147 is subject to Phosphotyrosine. The segment covering 232 to 283 has biased composition (basic and acidic residues); that stretch reads LNAPIRRNKEEPKARPLRVGDTEKPEPERSPPNRKRPANEKATDDYHYEKFK. The segment at 232–289 is disordered; the sequence is LNAPIRRNKEEPKARPLRVGDTEKPEPERSPPNRKRPANEKATDDYHYEKFKKMNRRY. Thr253 is subject to Phosphothreonine. Ser261 carries the phosphoserine modification.

Belongs to the TLS1 family. As to quaternary structure, component of the spliceosome. Interacts with SNRNP200; the interaction is direct. Interacts with PRPF8.

The protein localises to the nucleus. It localises to the chromosome. It is found in the centromere. Functionally, plays a role in pre-mRNA splicing by promoting usage of the upstream 3'-splice site at alternative NAGNAG splice sites; these are sites featuring alternative acceptor motifs separated by only a few nucleotides. May also modulate exon inclusion events. PPlays a role in spliceosomal remodeling by displacing WBP4 from SNRNP200 and may act to inhibit SNRNP200 helicase activity. Binds U5 snRNA. Required for proper chromosome segregation. Not required for splicing of shelterin components. The protein is Splicing factor C9orf78 homolog of Mus musculus (Mouse).